The sequence spans 656 residues: DNA mismatch repair protein MutL (656 aa).

The protein belongs to the DNA mismatch repair MutL/HexB family.

This protein is involved in the repair of mismatches in DNA. It is required for dam-dependent methyl-directed DNA mismatch repair. May act as a 'molecular matchmaker', a protein that promotes the formation of a stable complex between two or more DNA-binding proteins in an ATP-dependent manner without itself being part of a final effector complex. This chain is DNA mismatch repair protein MutL, found in Lactococcus lactis subsp. lactis (strain IL1403) (Streptococcus lactis).